The chain runs to 234 residues: Demethylmenaquinone methyltransferase (234 aa).

S-adenosyl-L-methionine-binding positions include Thr62, Asp80, 100 to 101 (DA), and Ser117.

Belongs to the class I-like SAM-binding methyltransferase superfamily. MenG/UbiE family.

It carries out the reaction a 2-demethylmenaquinol + S-adenosyl-L-methionine = a menaquinol + S-adenosyl-L-homocysteine + H(+). It functions in the pathway quinol/quinone metabolism; menaquinone biosynthesis; menaquinol from 1,4-dihydroxy-2-naphthoate: step 2/2. Functionally, methyltransferase required for the conversion of demethylmenaquinol (DMKH2) to menaquinol (MKH2). This is Demethylmenaquinone methyltransferase from Mycobacterium bovis (strain ATCC BAA-935 / AF2122/97).